A 147-amino-acid chain; its full sequence is uncharacterized protein (147 aa).

This is an uncharacterized protein from Archaeoglobus fulgidus (strain ATCC 49558 / DSM 4304 / JCM 9628 / NBRC 100126 / VC-16).